A 340-amino-acid polypeptide reads, in one-letter code: Methionine import ATP-binding protein MetN 2 (340 aa).

The region spanning 2 to 241 (ITLQNVVKEY…PQEKVTQRFV (240 aa)) is the ABC transporter domain. ATP is bound at residue 38–45 (GYSGAGKS).

The protein belongs to the ABC transporter superfamily. Methionine importer (TC 3.A.1.24) family. As to quaternary structure, the complex is composed of two ATP-binding proteins (MetN), two transmembrane proteins (MetI) and a solute-binding protein (MetQ).

The protein resides in the cell membrane. It catalyses the reaction L-methionine(out) + ATP + H2O = L-methionine(in) + ADP + phosphate + H(+). The catalysed reaction is D-methionine(out) + ATP + H2O = D-methionine(in) + ADP + phosphate + H(+). In terms of biological role, part of the ABC transporter complex MetNIQ involved in methionine import. Responsible for energy coupling to the transport system. The protein is Methionine import ATP-binding protein MetN 2 of Listeria monocytogenes serovar 1/2a (strain ATCC BAA-679 / EGD-e).